Reading from the N-terminus, the 74-residue chain is uncharacterized protein (74 aa).

2 disordered regions span residues 1-26 (MNGP…SGVF) and 46-74 (ITNS…SFTQ). The helical transmembrane segment at 34–50 (VSNKSIMLISLKITNSP) threads the bilayer. Low complexity predominate over residues 47-74 (TNSPNSNSRGSSSSSSTSKSSSKTSFTQ).

The protein resides in the membrane. This is an uncharacterized protein from Dictyostelium discoideum (Social amoeba).